Here is a 338-residue protein sequence, read N- to C-terminus: Pyridoxal 5'-phosphate synthase subunit PdxS (338 aa).

Asp66 provides a ligand contact to D-ribose 5-phosphate. Lys123 acts as the Schiff-base intermediate with D-ribose 5-phosphate in catalysis. Residue Gly195 participates in D-ribose 5-phosphate binding. Lys207 serves as a coordination point for D-glyceraldehyde 3-phosphate. D-ribose 5-phosphate is bound by residues Gly256 and 277 to 278 (GS).

The protein belongs to the PdxS/SNZ family. As to quaternary structure, in the presence of PdxT, forms a dodecamer of heterodimers.

It catalyses the reaction aldehydo-D-ribose 5-phosphate + D-glyceraldehyde 3-phosphate + L-glutamine = pyridoxal 5'-phosphate + L-glutamate + phosphate + 3 H2O + H(+). The protein operates within cofactor biosynthesis; pyridoxal 5'-phosphate biosynthesis. Its function is as follows. Catalyzes the formation of pyridoxal 5'-phosphate from ribose 5-phosphate (RBP), glyceraldehyde 3-phosphate (G3P) and ammonia. The ammonia is provided by the PdxT subunit. Can also use ribulose 5-phosphate and dihydroxyacetone phosphate as substrates, resulting from enzyme-catalyzed isomerization of RBP and G3P, respectively. The sequence is that of Pyridoxal 5'-phosphate synthase subunit PdxS from Saccharolobus islandicus (strain Y.N.15.51 / Yellowstone #2) (Sulfolobus islandicus).